A 72-amino-acid polypeptide reads, in one-letter code: Translation initiation factor IF-1 (72 aa).

The S1-like domain occupies methionine 1 to lysine 72. Residue tyrosine 60 is modified to Phosphotyrosine.

It belongs to the IF-1 family. Component of the 30S ribosomal translation pre-initiation complex which assembles on the 30S ribosome in the order IF-2 and IF-3, IF-1 and N-formylmethionyl-tRNA(fMet); mRNA recruitment can occur at any time during PIC assembly.

The protein resides in the cytoplasm. One of the essential components for the initiation of protein synthesis. Stabilizes the binding of IF-2 and IF-3 on the 30S subunit to which N-formylmethionyl-tRNA(fMet) subsequently binds. Helps modulate mRNA selection, yielding the 30S pre-initiation complex (PIC). Upon addition of the 50S ribosomal subunit IF-1, IF-2 and IF-3 are released leaving the mature 70S translation initiation complex. The polypeptide is Translation initiation factor IF-1 (Bacillus thuringiensis (strain Al Hakam)).